The primary structure comprises 149 residues: MNVFLSKYVNGVDKKSRVSVPANYRAVLGKELFNGVIAYPSIRNNCIEVCGISHIEKLRQMTETLDPYSEERDAFETMIFGEAVQLSFDGEGRVILPQSLMKHAGIEEQACFVGKGVIFEIWQPQNFEKYLNAAQKIAHEKRLTLRNAH.

SpoVT-AbrB domains are found at residues 7 to 54 and 83 to 126; these read KYVN…GISH and AVQL…QPQN.

Belongs to the MraZ family. In terms of assembly, forms oligomers.

Its subcellular location is the cytoplasm. The protein resides in the nucleoid. The polypeptide is Transcriptional regulator MraZ (Rickettsia peacockii (strain Rustic)).